The primary structure comprises 867 residues: Cadherin-related family member 1 (867 aa).

Residues 1–21 (MKHEWNLCPSIFFSIFHICLS) form the signal peptide. The Extracellular portion of the chain corresponds to 22–707 (VQTNYGPYFF…SKDNPMKALG (686 aa)). Cadherin domains lie at 39–138 (NGNM…SPGF), 139–250 (LNTP…PPVF), 251–357 (VGTP…PPTF), 363–476 (PQNR…VPRF), 477–580 (SSEY…SPEF), and 572–692 (DIND…GPMA). Residues 708–728 (VLAGVMAIMVVITIFISTAMF) form a helical membrane-spanning segment. Residues 729–867 (WRNKKSNRVM…KNAGSSMSFY (139 aa)) are Cytoplasmic-facing. The tract at residues 777–825 (EMESGPKNENRNNNYQGIPVPPRAPCPPPPPRLMPKVSKTERSLPTVSG) is disordered. The segment covering 795–809 (PVPPRAPCPPPPPRL) has biased composition (pro residues).

As to expression, expressed in photoreceptor cells of the outer nuclear layer of the retina and in the pinal gland.

The protein resides in the membrane. Its function is as follows. Potential calcium-dependent cell-adhesion protein. This chain is Cadherin-related family member 1 (cdhr1), found in Xenopus laevis (African clawed frog).